A 218-amino-acid polypeptide reads, in one-letter code: Adenylate kinase (218 aa).

Gly-10–Thr-15 serves as a coordination point for ATP. Residues Ser-30–Val-59 form an NMP region. Residues Thr-31, Arg-36, Asn-57–Val-59, Gly-85–Arg-88, and Gln-92 each bind AMP. The segment at Gly-122–Asp-159 is LID. ATP contacts are provided by residues Arg-123 and Thr-132–Tyr-133. The AMP site is built by Arg-156 and Arg-167. Gly-203 serves as a coordination point for ATP.

It belongs to the adenylate kinase family. Monomer.

Its subcellular location is the cytoplasm. The catalysed reaction is AMP + ATP = 2 ADP. It participates in purine metabolism; AMP biosynthesis via salvage pathway; AMP from ADP: step 1/1. Catalyzes the reversible transfer of the terminal phosphate group between ATP and AMP. Plays an important role in cellular energy homeostasis and in adenine nucleotide metabolism. This chain is Adenylate kinase, found in Chlorobium phaeovibrioides (strain DSM 265 / 1930) (Prosthecochloris vibrioformis (strain DSM 265)).